Reading from the N-terminus, the 500-residue chain is Protein FAM114A2 (500 aa).

The interval 1 to 82 (MSNKDDLETA…AAGKETVSKD (82 aa)) is disordered. Phosphoserine occurs at positions 93, 152, and 215.

Belongs to the FAM114 family.

The polypeptide is Protein FAM114A2 (FAM114A1) (Bos taurus (Bovine)).